Reading from the N-terminus, the 275-residue chain is Monooxygenase af470 (275 aa).

It catalyses the reaction prefumagillin + NADPH + 2 O2 = fumagillin + acetaldehyde + NADP(+) + H2O. Its pathway is secondary metabolite biosynthesis; terpenoid biosynthesis. In terms of biological role, monooxygenase; part of the gene cluster that mediates the biosynthesis of fumagillin, a meroterpenoid that has numerous biological activities including irreversible inhibition of human type 2 methionine aminopeptidase (METAP2). Within the pathway, the monooxygenase af470 catalyzes the oxidative cleavage of prefumagillin to yield the final compound of the pathway, fumagillin. The pathway begins with the conversion of farnesyl pyrophosphate (FPP) to beta-trans-bergamotene by the membrane-bound beta-trans-bergamotene synthase af520. The multifunctional cytochrome P450 monooxygenase af510 then converts beta-trans-bergamotene into 5-keto-demethoxyfumagillol via several oxydation steps. 5-keto-demethoxyfumagillol is then subjected to successive C-6 hydroxylation and O-methylation by the dioxygenase af480 and O-methyltransferase af390-400, respectively, to yield 5-keto-fumagillol, which is then stereoselectively reduced by the keto-reductase af490 to 5R-hydroxy-seco-sesquiterpene. The next step is the polyketide transferase af380-catalyzed transfer of a dodecapentaenoyl group synthesized by the polyketide synthase af370 onto 5R-hydroxy-seco-sesquiterpene which leads to the production of prefumagillin. Finally, oxidative cleavage by the monooxygenase af470 converts prefumagillin to fumagillin. The chain is Monooxygenase af470 from Aspergillus fumigatus (strain ATCC MYA-4609 / CBS 101355 / FGSC A1100 / Af293) (Neosartorya fumigata).